We begin with the raw amino-acid sequence, 161 residues long: Large ribosomal subunit protein uL15 (161 aa).

Positions methionine 1–glycine 43 are disordered. A compositionally biased stretch (gly residues) spans arginine 21 to glycine 37.

The protein belongs to the universal ribosomal protein uL15 family. As to quaternary structure, part of the 50S ribosomal subunit.

Binds to the 23S rRNA. This is Large ribosomal subunit protein uL15 from Bradyrhizobium sp. (strain ORS 278).